Reading from the N-terminus, the 647-residue chain is ATP-dependent zinc metalloprotease FtsH (647 aa).

The tract at residues 1–33 (MARKSDEDTNPMDKFMDRLRGSPGDGGPGRPDP) is disordered. The Cytoplasmic portion of the chain corresponds to 1–39 (MARKSDEDTNPMDKFMDRLRGSPGDGGPGRPDPSQRKVH). A helical membrane pass occupies residues 40 to 60 (FSIWYFILALLLIVWMQTYMG). Residues 61-134 (EQQSEKISYS…RFSGDVQNPW (74 aa)) are Periplasmic-facing. A helical transmembrane segment spans residues 135-155 (LGLITWWLLPFAIMIFFWSFL). Residues 156–647 (MRRMGGGPQG…DPVQVEGGAA (492 aa)) lie on the Cytoplasmic side of the membrane. ATP is bound at residue 227–234 (GAPGTGKT). His-449 is a binding site for Zn(2+). Glu-450 is a catalytic residue. His-453 and Asp-526 together coordinate Zn(2+).

The protein in the central section; belongs to the AAA ATPase family. In the C-terminal section; belongs to the peptidase M41 family. In terms of assembly, homohexamer. Requires Zn(2+) as cofactor.

It localises to the cell inner membrane. Functionally, acts as a processive, ATP-dependent zinc metallopeptidase for both cytoplasmic and membrane proteins. Plays a role in the quality control of integral membrane proteins. The polypeptide is ATP-dependent zinc metalloprotease FtsH (Syntrophobacter fumaroxidans (strain DSM 10017 / MPOB)).